A 66-amino-acid chain; its full sequence is MPKQKTHRASAKRFKRTGNGGLKRFRAYTSHRFHGKSVKQRRQLRKASMVSKGDFKRIRRMVATMK.

A compositionally biased stretch (basic residues) spans 1–16 (MPKQKTHRASAKRFKR). The segment at 1-21 (MPKQKTHRASAKRFKRTGNGG) is disordered.

Belongs to the bacterial ribosomal protein bL35 family.

This Lactococcus lactis subsp. cremoris (strain MG1363) protein is Large ribosomal subunit protein bL35.